Reading from the N-terminus, the 139-residue chain is Large ribosomal subunit protein bL17 (139 aa).

The protein belongs to the bacterial ribosomal protein bL17 family. In terms of assembly, part of the 50S ribosomal subunit. Contacts protein L32.

The chain is Large ribosomal subunit protein bL17 from Cereibacter sphaeroides (strain ATCC 17025 / ATH 2.4.3) (Rhodobacter sphaeroides).